The following is a 153-amino-acid chain: Ribonuclease H (153 aa).

An RNase H type-1 domain is found at 7-148 (PADLVEMWTD…ADMLANQGVA (142 aa)). Residues Asp-16, Glu-54, Asp-76, and Asp-140 each contribute to the Mg(2+) site.

Belongs to the RNase H family. As to quaternary structure, monomer. Mg(2+) is required as a cofactor.

It localises to the cytoplasm. The catalysed reaction is Endonucleolytic cleavage to 5'-phosphomonoester.. Its function is as follows. Endonuclease that specifically degrades the RNA of RNA-DNA hybrids. In Bordetella avium (strain 197N), this protein is Ribonuclease H.